A 611-amino-acid chain; its full sequence is Sensor histidine kinase WalK (611 aa).

Over 1-13 the chain is Cytoplasmic; sequence MNKVGFFRSIQFK. A helical transmembrane segment spans residues 14–34; the sequence is ITLIYVLLIIIAMQIIGVYFV. At 35-182 the chain is on the extracellular side; it reads NQVEKSLISS…VFNQMKTINT (148 aa). A helical transmembrane segment spans residues 183-203; that stretch reads ILASGTGLALVLTALLGIFLA. Residues 204–256 form the HAMP domain; that stretch reads RTITHPLSDMRKQAMELAKGNFSRKVKKYGHDEIGQLATTFNHLTRELEDAQA. At 204 to 611 the chain is on the cytoplasmic side; that stretch reads RTITHPLSDM…EEQEDDWDEA (408 aa). One can recognise a PAS domain in the interval 263–324; the sequence is RKLASVIAYM…QENYTFEDLV (62 aa). Residues 325-379 form the PAC domain; that stretch reads EQQDSMLLEIERDDELTVLRVNFSVIQREHGKIDGLIAVIYDVTEQEKMDQERRE. A Histidine kinase domain is found at 383–602; the sequence is NVSHELRTPL…TITFTLPYKE (220 aa). Position 386 is a phosphohistidine; by autocatalysis (His386).

Homodimer. Interacts with YycH and YycI. In terms of processing, autophosphorylated.

It localises to the cell membrane. It carries out the reaction ATP + protein L-histidine = ADP + protein N-phospho-L-histidine.. Member of the two-component regulatory system WalK/WalR involved in the regulation of the ftsAZ operon, the yocH and ykvT, cwlO, lytE, ydjM, yjeA, yoeB genes and the tagAB and tagDEF operons. Phosphorylates WalR. In Bacillus subtilis (strain 168), this protein is Sensor histidine kinase WalK.